We begin with the raw amino-acid sequence, 313 residues long: Flagellin (313 aa).

Coiled coils occupy residues 5 to 33 (INTN…ERLS) and 97 to 117 (VQSE…KEVT). Tandem repeats lie at residues 179–197 (KEAV…VPAD), 199–217 (KNGV…VKAQ), 255–259 (VNNLN), and 262–266 (VNNLS). The 2 X 19 AA approximate tandem repeats stretch occupies residues 179–217 (KEAVAAKPAVPAQPAVPADPKNGVAAKPAVPAQPEVKAQ). The segment covering 190 to 199 (AQPAVPADPK) has biased composition (low complexity). Positions 190–211 (AQPAVPADPKNGVAAKPAVPAQ) are disordered. The stretch at 252–298 (ESTVNNLNNTVNNLSAARSRIEDADYAVEVSNMSRGQILQQAGTSVL) forms a coiled coil. Residues 255–266 (VNNLNNTVNNLS) are 2 X 5 AA approximate repeats of V-N-N-L-N.

It belongs to the bacterial flagellin family.

It localises to the secreted. The protein resides in the bacterial flagellum. Flagellin is the subunit protein which polymerizes to form the filaments of bacterial flagella. In Xenorhabdus nematophila (Achromobacter nematophilus), this protein is Flagellin (fliC).